The primary structure comprises 243 residues: DNA repair protein RecO (243 aa).

This sequence belongs to the RecO family.

Functionally, involved in DNA repair and RecF pathway recombination. In Azoarcus sp. (strain BH72), this protein is DNA repair protein RecO.